Reading from the N-terminus, the 1082-residue chain is Mediator of RNA polymerase II transcription subunit 14 (1082 aa).

Disordered stretches follow at residues 1–80 and 319–343; these read MTTT…APPP and EATS…NLPL. The residue at position 2 (Thr2) is an N-acetylthreonine. Position 7 is a phosphoserine (Ser7). The span at 13-28 shows a compositional bias: basic and acidic residues; it reads NEERLSNEMHALKNRS. The segment covering 29 to 59 has biased composition (polar residues); it reads EQNGQEQQGPVKNTQLHGPSATDPETTATQK. The segment covering 321-340 has biased composition (low complexity); that stretch reads TSTNGDSENNEENSSSNGNN. Phosphothreonine is present on Thr1036.

The protein belongs to the Mediator complex subunit 14 family. As to quaternary structure, component of the Mediator complex, which is composed of at least 21 subunits that form three structurally distinct submodules. The Mediator head module contains MED6, MED8, MED11, SRB4/MED17, SRB5/MED18, ROX3/MED19, SRB2/MED20 and SRB6/MED22, the middle module contains MED1, MED4, NUT1/MED5, MED7, CSE2/MED9, NUT2/MED10, SRB7/MED21 and SOH1/MED31, and the tail module contains MED2, PGD1/MED3, RGR1/MED14, GAL11/MED15 and SIN4/MED16. The head and the middle modules interact directly with RNA polymerase II, whereas the elongated tail module interacts with gene-specific regulatory proteins.

The protein localises to the nucleus. In terms of biological role, component of the Mediator complex, a coactivator involved in the regulated transcription of nearly all RNA polymerase II-dependent genes. Mediator functions as a bridge to convey information from gene-specific regulatory proteins to the basal RNA polymerase II transcription machinery. The Mediator complex, having a compact conformation in its free form, is recruited to promoters by direct interactions with regulatory proteins and serves for the assembly of a functional preinitiation complex with RNA polymerase II and the general transcription factors. The Mediator complex unfolds to an extended conformation and partially surrounds RNA polymerase II, specifically interacting with the unphosphorylated form of the C-terminal domain (CTD) of RNA polymerase II. The Mediator complex dissociates from the RNA polymerase II holoenzyme and stays at the promoter when transcriptional elongation begins. This Saccharomyces cerevisiae (strain ATCC 204508 / S288c) (Baker's yeast) protein is Mediator of RNA polymerase II transcription subunit 14 (RGR1).